The primary structure comprises 359 residues: 3-dehydroquinate synthase (359 aa).

NAD(+) is bound by residues 106–110 (GVVGD), 130–131 (TT), lysine 143, lysine 152, and 170–173 (TLQT). Zn(2+)-binding residues include glutamate 185, histidine 248, and histidine 265.

Belongs to the sugar phosphate cyclases superfamily. Dehydroquinate synthase family. It depends on Co(2+) as a cofactor. Requires Zn(2+) as cofactor. NAD(+) is required as a cofactor.

Its subcellular location is the cytoplasm. The catalysed reaction is 7-phospho-2-dehydro-3-deoxy-D-arabino-heptonate = 3-dehydroquinate + phosphate. It participates in metabolic intermediate biosynthesis; chorismate biosynthesis; chorismate from D-erythrose 4-phosphate and phosphoenolpyruvate: step 2/7. In terms of biological role, catalyzes the conversion of 3-deoxy-D-arabino-heptulosonate 7-phosphate (DAHP) to dehydroquinate (DHQ). This is 3-dehydroquinate synthase from Desulforamulus reducens (strain ATCC BAA-1160 / DSM 100696 / MI-1) (Desulfotomaculum reducens).